A 293-amino-acid polypeptide reads, in one-letter code: Elongation factor Ts (293 aa).

The tract at residues 80 to 83 is involved in Mg(2+) ion dislocation from EF-Tu; sequence TDFV.

It belongs to the EF-Ts family.

It is found in the cytoplasm. Its function is as follows. Associates with the EF-Tu.GDP complex and induces the exchange of GDP to GTP. It remains bound to the aminoacyl-tRNA.EF-Tu.GTP complex up to the GTP hydrolysis stage on the ribosome. The polypeptide is Elongation factor Ts (Burkholderia pseudomallei (strain 1106a)).